A 219-amino-acid polypeptide reads, in one-letter code: Mucosal pentraxin (219 aa).

The first 19 residues, 1–19 (MEKLIVGILFLSVLSGSVA), serve as a signal peptide directing secretion. A Pentraxin (PTX) domain is found at 24–219 (KGKAFIFPQE…YVVIKPKLWP (196 aa)). Residue asparagine 51 is glycosylated (N-linked (GlcNAc...) asparagine). A disulfide bridge links cysteine 55 with cysteine 114. Ca(2+) is bound by residues aspartate 77, asparagine 78, glutamate 155, glutamine 156, aspartate 157, and glutamine 167.

Belongs to the pentraxin family. As to quaternary structure, homopentamer. Pentraxin (or pentaxin) have a discoid arrangement of 5 non-covalently bound subunits. Ca(2+) is required as a cofactor. In terms of tissue distribution, expressed in colon.

The protein localises to the secreted. The polypeptide is Mucosal pentraxin (Mptx1) (Mus musculus (Mouse)).